The sequence spans 200 residues: MIASVRGEVLEIALDHAVIESAGVGYRVNATPATLGGLQRGSEARLVTAMIVREDSMTLYGFPDSESKELFGLLQTVSGVGPRLAMATLAVLEPDALRAALAEGNVTALTRVPGIGKRGAERMVVELRDKVDAVASTSGAVPLGAGGGGSVRDQIVEALVGLGFPAKQAEQAADSVLAEAPESTTSTALRSALSLLGKTR.

Residues 1-63 (MIASVRGEVL…EDSMTLYGFP (63 aa)) form a domain I region. A domain II region spans residues 64 to 142 (DSESKELFGL…AVASTSGAVP (79 aa)). A flexible linker region spans residues 142–146 (PLGAG). Residues 147-200 (GGGSVRDQIVEALVGLGFPAKQAEQAADSVLAEAPESTTSTALRSALSLLGKTR) form a domain III region.

This sequence belongs to the RuvA family. Homotetramer. Forms an RuvA(8)-RuvB(12)-Holliday junction (HJ) complex. HJ DNA is sandwiched between 2 RuvA tetramers; dsDNA enters through RuvA and exits via RuvB. An RuvB hexamer assembles on each DNA strand where it exits the tetramer. Each RuvB hexamer is contacted by two RuvA subunits (via domain III) on 2 adjacent RuvB subunits; this complex drives branch migration. In the full resolvosome a probable DNA-RuvA(4)-RuvB(12)-RuvC(2) complex forms which resolves the HJ.

It localises to the cytoplasm. Its function is as follows. The RuvA-RuvB-RuvC complex processes Holliday junction (HJ) DNA during genetic recombination and DNA repair, while the RuvA-RuvB complex plays an important role in the rescue of blocked DNA replication forks via replication fork reversal (RFR). RuvA specifically binds to HJ cruciform DNA, conferring on it an open structure. The RuvB hexamer acts as an ATP-dependent pump, pulling dsDNA into and through the RuvAB complex. HJ branch migration allows RuvC to scan DNA until it finds its consensus sequence, where it cleaves and resolves the cruciform DNA. The chain is Holliday junction branch migration complex subunit RuvA from Rhodococcus jostii (strain RHA1).